The chain runs to 468 residues: 3-isopropylmalate dehydratase large subunit (468 aa).

Positions 347, 407, and 410 each coordinate [4Fe-4S] cluster.

It belongs to the aconitase/IPM isomerase family. LeuC type 1 subfamily. Heterodimer of LeuC and LeuD. The cofactor is [4Fe-4S] cluster.

The catalysed reaction is (2R,3S)-3-isopropylmalate = (2S)-2-isopropylmalate. It participates in amino-acid biosynthesis; L-leucine biosynthesis; L-leucine from 3-methyl-2-oxobutanoate: step 2/4. Catalyzes the isomerization between 2-isopropylmalate and 3-isopropylmalate, via the formation of 2-isopropylmaleate. The sequence is that of 3-isopropylmalate dehydratase large subunit from Campylobacter jejuni (strain RM1221).